A 179-amino-acid chain; its full sequence is Large ribosomal subunit protein uL5 (179 aa).

This sequence belongs to the universal ribosomal protein uL5 family. In terms of assembly, part of the 50S ribosomal subunit; part of the 5S rRNA/L5/L18/L25 subcomplex. Contacts the 5S rRNA and the P site tRNA. Forms a bridge to the 30S subunit in the 70S ribosome.

Its function is as follows. This is one of the proteins that bind and probably mediate the attachment of the 5S RNA into the large ribosomal subunit, where it forms part of the central protuberance. In the 70S ribosome it contacts protein S13 of the 30S subunit (bridge B1b), connecting the 2 subunits; this bridge is implicated in subunit movement. Contacts the P site tRNA; the 5S rRNA and some of its associated proteins might help stabilize positioning of ribosome-bound tRNAs. The polypeptide is Large ribosomal subunit protein uL5 (Francisella tularensis subsp. tularensis (strain SCHU S4 / Schu 4)).